The chain runs to 416 residues: Sarcosine oxidase subunit beta (416 aa).

Positions 41, 42, 63, 71, 76, and 78 each coordinate FAD. Histidine 182 carries the tele-8alpha-FMN histidine modification. Valine 206, glycine 366, and lysine 368 together coordinate FAD.

Belongs to the SoxB family. As to quaternary structure, heterotetramer composed of subunits alpha (SoxA), beta (SoxB), gamma (SoxG) and delta (SoxD). FAD is required as a cofactor. FMN serves as cofactor.

The protein resides in the cytoplasm. It catalyses the reaction sarcosine + (6S)-5,6,7,8-tetrahydrofolate + O2 = (6R)-5,10-methylene-5,6,7,8-tetrahydrofolate + glycine + H2O2. It carries out the reaction sarcosine + O2 + H2O = formaldehyde + glycine + H2O2. In terms of biological role, in the presence of tetrahydrofolate, catalyzes the oxidative demethylation of sarcosine to yield glycine, 5,10-methylenetetrahydrofolate and hydrogen peroxide. In the absence of tetrahydrofolate, catalyzes the oxidative demethylation of sarcosine to yield glycine, formaldehyde and hydrogen peroxide. In Rhizobium meliloti (strain 1021) (Ensifer meliloti), this protein is Sarcosine oxidase subunit beta (soxB).